A 467-amino-acid chain; its full sequence is MAADTRAKAVTLDLRRRLLSSSCRLFFPEDPVKIIRGQGQYLYDEQGREYLDCINNVAHVGHCHPTVVQAAHEQNLVLNTNSRYLHDNIVDYAQRLSETLPEQLSVFYFLNSGSEANDLALRLARQYTGHQDVVVLDHAYHGHLSSLIDISPYKFRNLGGQKEWVHVAPLPDTYRGPYREDHPNPAEAYANEVKHVISSAQQKGRKIAAFFAESLPSVSGQIIPPAGYFSQVAEHIHRAGGLFVADEIQVGFGRIGKHFWAFQLEGEDFVPDIVTMGKSIGNGHPVACMATTQAVSRAFEATGVEYFNTFGGNPVSCAVGLAVLDVLKTEQLQAHATNVGSFLLEHLTQQKAKHPIIGDVRGTGLFIGVDLIKDETLRTPATEEAEYLVSRLKENYILLSIDGPGKNILKFKPPMCFNVDNAQHVVAKLDDILTDMEEKVRSCETLRIKHPPEDTHPTQILLTRQQD.

N6-(pyridoxal phosphate)lysine is present on Lys-278.

The protein belongs to the class-III pyridoxal-phosphate-dependent aminotransferase family. As to quaternary structure, homotetramer. Pyridoxal 5'-phosphate serves as cofactor.

The protein resides in the mitochondrion. The catalysed reaction is (5R)-5-phosphooxy-L-lysine + H2O = (S)-2-amino-6-oxohexanoate + NH4(+) + phosphate. Functionally, catalyzes the pyridoxal-phosphate-dependent breakdown of 5-phosphohydroxy-L-lysine, converting it to ammonia, inorganic phosphate and 2-aminoadipate semialdehyde. The polypeptide is 5-phosphohydroxy-L-lysine phospho-lyase (Phykpl) (Mus musculus (Mouse)).